We begin with the raw amino-acid sequence, 309 residues long: Porphobilinogen deaminase (309 aa).

Residue cysteine 244 is modified to S-(dipyrrolylmethanemethyl)cysteine.

Belongs to the HMBS family. In terms of assembly, monomer. Dipyrromethane serves as cofactor.

The enzyme catalyses 4 porphobilinogen + H2O = hydroxymethylbilane + 4 NH4(+). Its pathway is porphyrin-containing compound metabolism; protoporphyrin-IX biosynthesis; coproporphyrinogen-III from 5-aminolevulinate: step 2/4. Tetrapolymerization of the monopyrrole PBG into the hydroxymethylbilane pre-uroporphyrinogen in several discrete steps. The polypeptide is Porphobilinogen deaminase (Listeria welshimeri serovar 6b (strain ATCC 35897 / DSM 20650 / CCUG 15529 / CIP 8149 / NCTC 11857 / SLCC 5334 / V8)).